The following is a 692-amino-acid chain: DNA ligase (692 aa).

NAD(+) is bound by residues D34–D38, S83–L84, and E124. K126 serves as the catalytic N6-AMP-lysine intermediate. 4 residues coordinate NAD(+): R147, E193, K310, and K334. C428, C431, C446, and C452 together coordinate Zn(2+). Residues A612–A692 form the BRCT domain.

The protein belongs to the NAD-dependent DNA ligase family. LigA subfamily. The cofactor is Mg(2+). Mn(2+) is required as a cofactor.

The enzyme catalyses NAD(+) + (deoxyribonucleotide)n-3'-hydroxyl + 5'-phospho-(deoxyribonucleotide)m = (deoxyribonucleotide)n+m + AMP + beta-nicotinamide D-nucleotide.. DNA ligase that catalyzes the formation of phosphodiester linkages between 5'-phosphoryl and 3'-hydroxyl groups in double-stranded DNA using NAD as a coenzyme and as the energy source for the reaction. It is essential for DNA replication and repair of damaged DNA. The chain is DNA ligase from Laribacter hongkongensis (strain HLHK9).